A 357-amino-acid polypeptide reads, in one-letter code: Glycerol-3-phosphate dehydrogenase [NAD(P)+] (357 aa).

Ser30, Phe31, Arg51, and Lys124 together coordinate NADPH. Sn-glycerol 3-phosphate contacts are provided by Lys124 and Gly152. Ala156 lines the NADPH pocket. Residues Lys207, Asp260, Ser270, Arg271, and Asn272 each contribute to the sn-glycerol 3-phosphate site. Catalysis depends on Lys207, which acts as the Proton acceptor. NADPH is bound at residue Arg271. Glu297 contacts NADPH.

The protein belongs to the NAD-dependent glycerol-3-phosphate dehydrogenase family.

It is found in the cytoplasm. It carries out the reaction sn-glycerol 3-phosphate + NAD(+) = dihydroxyacetone phosphate + NADH + H(+). The enzyme catalyses sn-glycerol 3-phosphate + NADP(+) = dihydroxyacetone phosphate + NADPH + H(+). The protein operates within membrane lipid metabolism; glycerophospholipid metabolism. Its function is as follows. Catalyzes the reduction of the glycolytic intermediate dihydroxyacetone phosphate (DHAP) to sn-glycerol 3-phosphate (G3P), the key precursor for phospholipid synthesis. This chain is Glycerol-3-phosphate dehydrogenase [NAD(P)+], found in Acinetobacter baylyi (strain ATCC 33305 / BD413 / ADP1).